A 261-amino-acid chain; its full sequence is Single-strand annealing weakened protein 1 (261 aa).

In terms of assembly, interacts with MSH2, MSH3, RAD1, RAD10, RAD51 and RAD52.

The protein localises to the nucleus. In terms of biological role, catalyzes 3'-non-homologous tail removal of RAD1/RAD10-dependent single-strand annealing recombination intermediates. Plays a key role in targeting RAD1/RAD10 complex to 3'-flap cleavage substrate in recombination. Also contributes to the integrity of ribosomal DNA arrays. This Saccharomyces cerevisiae (strain ATCC 204508 / S288c) (Baker's yeast) protein is Single-strand annealing weakened protein 1 (SAW1).